The sequence spans 474 residues: Transcription factor SOX-4 (474 aa).

Residues 1-10 (MVQQTNNAEN) show a composition bias toward polar residues. A disordered region spans residues 1 to 58 (MVQQTNNAENTEALLAGESSDSGAGLELGIASSPTPGSTASTGGKADDPSWCKTPSGH). The span at 31–44 (ASSPTPGSTASTGG) shows a compositional bias: low complexity. Positions 59 to 127 (IKRPMNAFMV…KHMADYPDYK (69 aa)) form a DNA-binding region, HMG box. An N6-acetyllysine modification is found at Lys-95. Disordered stretches follow at residues 128 to 228 (YRPR…GGGK), 262 to 286 (ARTPSASASASSAASASAALAAPGK), and 302 to 416 (LGTS…NFES). The segment covering 138 to 149 (NANSSSSAAASS) has biased composition (low complexity). A compositionally biased stretch (gly residues) spans 158–189 (VGGSGGGGHGGGGGGGSSNAGGGGGGASGGGA). Low complexity-rich tracts occupy residues 266 to 283 (SASASASSAASASAALAA), 304 to 320 (TSSSPVGGVGAGADPSD), 336 to 354 (APSLSGRSSAASSPAAGRS), and 366 to 396 (AASPAPSSAPSHASSSASSHSSSSSSSGSSS). Acidic residues predominate over residues 397–406 (SDDEFEDDLL). The segment covering 407 to 416 (DLNPSSNFES) has biased composition (low complexity). The 9aaTAD signature appears at 426–434 (SALDRDLDF).

In terms of assembly, interacts with UBE2I. Interacts with HDAC1; interaction inhibits the transcriptional activator activity. Post-translationally, acetylation at Lys-95 by KAT5 promotes the transcription activator activity and is required during myoblast differentiation. Acetylation by KAT5 abolishes the interaction between SOX4 and HDAC1 and switches SOX4 into a transcriptional activator. As to expression, testis, brain, and heart.

It is found in the nucleus. Its function is as follows. Transcriptional activator that binds with high affinity to the T-cell enhancer motif 5'-AACAAAG-3' motif. Required for IL17A-producing Vgamma2-positive gamma-delta T-cell maturation and development, via binding to regulator loci of RORC to modulate expression. Involved in skeletal myoblast differentiation by promoting gene expression of CALD1. The chain is Transcription factor SOX-4 from Homo sapiens (Human).